The following is a 472-amino-acid chain: Sarcalumenin (472 aa).

The signal sequence occupies residues 1–19; it reads MRALLLFCFVASLLLSGQA. Residues 89–330 enclose the Dynamin-type G domain; it reads ITSKPMVLFL…IENRLENKIA (242 aa). Residues 99–106 are G1 motif; it reads GPWSVGKS. The N-linked (GlcNAc...) asparagine glycan is linked to Ser-102. The G2 motif stretch occupies residues 127 to 128; it reads EP. The G3 motif stretch occupies residues 189 to 192; it reads DTPG. Residues 254-257 form a G4 motif region; it reads NKAD. Pro-277 is a region of interest (G5 motif). N-linked (GlcNAc...) asparagine glycans are attached at residues Asn-280 and Asn-388.

Belongs to the TRAFAC class dynamin-like GTPase superfamily. Dynamin/Fzo/YdjA family. Post-translationally, N-glycosylated. As to expression, detected in skeletal muscle.

It localises to the sarcoplasmic reticulum lumen. It is found in the sarcoplasmic reticulum membrane. This is Sarcalumenin (SRL) from Oryctolagus cuniculus (Rabbit).